We begin with the raw amino-acid sequence, 209 residues long: Large ribosomal subunit protein uL3 (209 aa).

Residue Gln-150 is modified to N5-methylglutamine.

The protein belongs to the universal ribosomal protein uL3 family. As to quaternary structure, part of the 50S ribosomal subunit. Forms a cluster with proteins L14 and L19. Post-translationally, methylated by PrmB.

Its function is as follows. One of the primary rRNA binding proteins, it binds directly near the 3'-end of the 23S rRNA, where it nucleates assembly of the 50S subunit. This chain is Large ribosomal subunit protein uL3, found in Buchnera aphidicola subsp. Schizaphis graminum (strain Sg).